The following is a 208-amino-acid chain: Cysteine-rich protein 2 (208 aa).

An LIM zinc-binding 1 domain is found at 5–57; sequence CPKCDKTVYFAEKVSSLGKDWHRFCLRCEHCSKTLTPGGHAEHDGKPFCHKPC. Lys-23 is subject to N6-acetyllysine. The segment at 98–117 is disordered; the sequence is TEERKASGPPKGPSKASSVT. Ser-104 carries the phosphoserine modification. Over residues 104–115 the composition is skewed to low complexity; the sequence is SGPPKGPSKASS. In terms of domain architecture, LIM zinc-binding 2 spans 126–178; sequence CPRCNKRVYFAEKVTSLGKDWHRPCLRCERCGKTLTPGGHAEHDGQPYCHKPC. Residues Lys-138 and Lys-144 each carry the N6-acetyllysine modification.

In terms of assembly, interacts with TGFB1I1.

This chain is Cysteine-rich protein 2 (CRIP2), found in Bos taurus (Bovine).